The chain runs to 126 residues: Protein ApaG (126 aa).

One can recognise an ApaG domain in the interval 2 to 126 (SDTQHQVNVR…FRLAVPGALH (125 aa)).

This Pseudomonas paraeruginosa (strain DSM 24068 / PA7) (Pseudomonas aeruginosa (strain PA7)) protein is Protein ApaG.